The following is a 967-amino-acid chain: Sarcosine oxidase subunit alpha (967 aa).

8 residues coordinate NAD(+): A141, D160, E161, R162, S168, V207, A420, and T427. (6R)-5,10-methylene-5,6,7,8-tetrahydrofolate is bound by residues T694 and E786.

It belongs to the GcvT family. As to quaternary structure, heterotetramer composed of subunits alpha (SoxA), beta (SoxB), gamma (SoxG) and delta (SoxD). NAD(+) is required as a cofactor.

The protein resides in the cytoplasm. It carries out the reaction sarcosine + (6S)-5,6,7,8-tetrahydrofolate + O2 = (6R)-5,10-methylene-5,6,7,8-tetrahydrofolate + glycine + H2O2. It catalyses the reaction sarcosine + O2 + H2O = formaldehyde + glycine + H2O2. Functionally, in the presence of tetrahydrofolate, catalyzes the oxidative demethylation of sarcosine to yield glycine, 5,10-methylenetetrahydrofolate and hydrogen peroxide. In the absence of tetrahydrofolate, catalyzes the oxidative demethylation of sarcosine to yield glycine, formaldehyde and hydrogen peroxide. The protein is Sarcosine oxidase subunit alpha of Corynebacterium sp. (strain P-1).